We begin with the raw amino-acid sequence, 122 residues long: MREILLIGLGGFFGAILRYLVSGIIPVKFGIPTGTLIVNLLGSFIIGFLIYSSLFGSLSTEYRLFIITGFCGALTTFSTFSYESFTMLEHNYYLKTGLNILLNVFGCLGMVYLGRLASMFFW.

Helical transmembrane passes span 4-24, 36-56, 65-85, and 100-120; these read ILLI…VSGI, LIVN…SLFG, FIIT…YESF, and ILLN…ASMF. Na(+) is bound by residues glycine 72 and threonine 75.

The protein belongs to the fluoride channel Fluc/FEX (TC 1.A.43) family.

The protein resides in the cell membrane. It catalyses the reaction fluoride(in) = fluoride(out). Its activity is regulated as follows. Na(+) is not transported, but it plays an essential structural role and its presence is essential for fluoride channel function. In terms of biological role, fluoride-specific ion channel. Important for reducing fluoride concentration in the cell, thus reducing its toxicity. The polypeptide is Fluoride-specific ion channel FluC (Methanococcus maripaludis (strain DSM 14266 / JCM 13030 / NBRC 101832 / S2 / LL)).